The sequence spans 149 residues: Transcriptional repressor NrdR (149 aa).

A zinc finger spans residues 3 to 34 (CPFCSEQETKVIDSRLVAEGQQVRRRRECMVC). The ATP-cone domain maps to 49 to 139 (PRVIKRDGSR…VYRSFEDIRE (91 aa)).

This sequence belongs to the NrdR family. The cofactor is Zn(2+).

Negatively regulates transcription of bacterial ribonucleotide reductase nrd genes and operons by binding to NrdR-boxes. The chain is Transcriptional repressor NrdR from Alteromonas mediterranea (strain DSM 17117 / CIP 110805 / LMG 28347 / Deep ecotype).